The primary structure comprises 173 residues: Dual-action ribosomal maturation protein DarP (173 aa).

It belongs to the DarP family.

It localises to the cytoplasm. In terms of biological role, member of a network of 50S ribosomal subunit biogenesis factors which assembles along the 30S-50S interface, preventing incorrect 23S rRNA structures from forming. Promotes peptidyl transferase center (PTC) maturation. This Pseudomonas putida (strain ATCC 700007 / DSM 6899 / JCM 31910 / BCRC 17059 / LMG 24140 / F1) protein is Dual-action ribosomal maturation protein DarP.